We begin with the raw amino-acid sequence, 401 residues long: Chromatin modification-related protein EAF3 (401 aa).

Residues 13 to 98 (RCLAFHGPLM…DEWVGYDRIR (86 aa)) form the Tudor-knot domain. The span at 39–53 (TSIPNDKPGGSSQAT) shows a compositional bias: polar residues. Disordered regions lie at residues 39 to 65 (TSIP…GEDE) and 117 to 210 (EAKK…NMLH). Composition is skewed to basic and acidic residues over residues 54 to 63 (KEIKPQKLGE) and 117 to 126 (EAKKSLLEQQ). Positions 153–190 (SISKSTSQSFLTSSVSGRKSGRSSANSLHPGSSLRSSS) are enriched in low complexity. The residue at position 201 (S201) is a Phosphoserine. The region spanning 216-399 (PTPKISLQIP…TSSQYEGVAL (184 aa)) is the MRG domain.

The protein belongs to the MRG family. In terms of assembly, component of the NuA4 histone acetyltransferase complex composed of at least ACT1, ARP4, YAF9, VID21, SWC4, EAF3, EAF5, EAF6, EAF7, EPL1, ESA1, TRA1 and YNG2.

The protein resides in the nucleus. Its function is as follows. Component of the NuA4 histone acetyltransferase complex which is involved in transcriptional activation of selected genes principally by acetylation of nucleosomal histone H4 and H2A. The NuA4 complex is also involved in DNA repair. This is Chromatin modification-related protein EAF3 (EAF3) from Saccharomyces cerevisiae (strain ATCC 204508 / S288c) (Baker's yeast).